The primary structure comprises 487 residues: Glutamate--tRNA ligase 2 (487 aa).

The 'HIGH' region signature appears at 24–34 (PSPTGFLHIGG). The short motif at 258–262 (KLSKR) is the 'KMSKS' region element. An ATP-binding site is contributed by K261.

The protein belongs to the class-I aminoacyl-tRNA synthetase family. Glutamate--tRNA ligase type 1 subfamily. As to quaternary structure, monomer.

It is found in the cytoplasm. It carries out the reaction tRNA(Glu) + L-glutamate + ATP = L-glutamyl-tRNA(Glu) + AMP + diphosphate. Functionally, catalyzes the attachment of glutamate to tRNA(Glu) in a two-step reaction: glutamate is first activated by ATP to form Glu-AMP and then transferred to the acceptor end of tRNA(Glu). This Novosphingobium aromaticivorans (strain ATCC 700278 / DSM 12444 / CCUG 56034 / CIP 105152 / NBRC 16084 / F199) protein is Glutamate--tRNA ligase 2.